Consider the following 315-residue polypeptide: Serine/threonine-protein phosphatase PP2A catalytic subunit 2 (315 aa).

Mn(2+) contacts are provided by Asp62, His64, Asp90, and Asn122. His123 (proton donor) is an active-site residue. Mn(2+) contacts are provided by His172 and His247. Positions 294-315 (QFEPAPRENEPHTTRRVPDYFL) are disordered. Positions 298–315 (APRENEPHTTRRVPDYFL) are enriched in basic and acidic residues. Residue Leu315 is modified to Leucine methyl ester.

This sequence belongs to the PPP phosphatase family. PP-2A subfamily. Requires Mn(2+) as cofactor. Reversibly methyl esterified on Leu-315 by leucine carboxyl methyltransferase 1 (PPM1) and protein phosphatase methylesterase 1 (PPE1). Carboxyl methylation influences the affinity of the catalytic subunit for the different regulatory subunits, thereby modulating the PP2A holoenzyme's substrate specificity, enzyme activity and cellular localization.

The catalysed reaction is O-phospho-L-seryl-[protein] + H2O = L-seryl-[protein] + phosphate. It catalyses the reaction O-phospho-L-threonyl-[protein] + H2O = L-threonyl-[protein] + phosphate. This is Serine/threonine-protein phosphatase PP2A catalytic subunit 2 (Ppn2) from Paramecium tetraurelia.